A 202-amino-acid chain; its full sequence is Large ribosomal subunit protein uL13 (202 aa).

It belongs to the universal ribosomal protein uL13 family.

This Caenorhabditis elegans protein is Large ribosomal subunit protein uL13.